We begin with the raw amino-acid sequence, 327 residues long: GTP 3',8-cyclase (327 aa).

The Radical SAM core domain occupies 8–232; sequence AFARKFYYLR…LQRSRSDGPA (225 aa). Arg17 is a binding site for GTP. Cys24 and Cys28 together coordinate [4Fe-4S] cluster. Residue Tyr30 coordinates S-adenosyl-L-methionine. Residue Cys31 participates in [4Fe-4S] cluster binding. Arg66 is a binding site for GTP. Gly70 contacts S-adenosyl-L-methionine. GTP is bound at residue Thr97. Ser121 is an S-adenosyl-L-methionine binding site. Lys158 serves as a coordination point for GTP. S-adenosyl-L-methionine is bound at residue Met192. [4Fe-4S] cluster is bound by residues Cys255 and Cys258. A GTP-binding site is contributed by 260–262; the sequence is RLR. Cys272 is a binding site for [4Fe-4S] cluster.

The protein belongs to the radical SAM superfamily. MoaA family. In terms of assembly, monomer and homodimer. The cofactor is [4Fe-4S] cluster.

It catalyses the reaction GTP + AH2 + S-adenosyl-L-methionine = (8S)-3',8-cyclo-7,8-dihydroguanosine 5'-triphosphate + 5'-deoxyadenosine + L-methionine + A + H(+). The protein operates within cofactor biosynthesis; molybdopterin biosynthesis. In terms of biological role, catalyzes the cyclization of GTP to (8S)-3',8-cyclo-7,8-dihydroguanosine 5'-triphosphate. This is GTP 3',8-cyclase from Photorhabdus laumondii subsp. laumondii (strain DSM 15139 / CIP 105565 / TT01) (Photorhabdus luminescens subsp. laumondii).